The chain runs to 511 residues: Maturase K (511 aa).

It belongs to the intron maturase 2 family. MatK subfamily.

It localises to the plastid. The protein resides in the chloroplast. In terms of biological role, usually encoded in the trnK tRNA gene intron. Probably assists in splicing its own and other chloroplast group II introns. The chain is Maturase K from Mandragora officinarum (Mandrake).